Here is a 264-residue protein sequence, read N- to C-terminus: Apolipoprotein A-I (264 aa).

Residues 1-18 form the signal peptide; sequence MKAVVLTVAVFFLTGSQA. 2 tandem repeats follow at residues 67–88 and 89–110. Residues 67–264 form a 10 X approximate tandem repeats region; it reads LKLLDNWDSL…DEATKKLTTQ (198 aa). The residue at position 109 (M109) is a Methionine sulfoxide. A 3; half-length repeat occupies 111–121; sequence KDLEEVKLKVQ. 3 tandem repeats follow at residues 122–143, 144–165, and 166–187. The 7; truncated repeat unit spans residues 188 to 207; sequence PYSDELRQRLAARLEALKES. Repeat 8 spans residues 208–229; the sequence is SSLADYQAKATEHLSALGEKAK. Residues 230–240 form a 9; half-length repeat; the sequence is PALEDLRQGLL. Copy 10 of the repeat occupies 241-264; that stretch reads PVLENLKMSFWSAVDEATKKLTTQ.

The protein belongs to the apolipoprotein A1/A4/E family. In terms of assembly, homodimer. Interacts with APOA1BP and CLU. Component of a sperm activating protein complex (SPAP), consisting of APOA1, an immunoglobulin heavy chain, an immunoglobulin light chain and albumin. Interacts with NDRG1. Interacts with SCGB3A2. Interacts with NAXE and YJEFN3. Glycosylated. In terms of processing, palmitoylated. Post-translationally, phosphorylation sites are present in the extracellular medium.

It is found in the secreted. Its function is as follows. Participates in the reverse transport of cholesterol from tissues to the liver for excretion by promoting cholesterol efflux from tissues and by acting as a cofactor for the lecithin cholesterol acyltransferase (LCAT). As part of the SPAP complex, activates spermatozoa motility. The protein is Apolipoprotein A-I (ApoA1) of Marmota monax (Woodchuck).